The primary structure comprises 423 residues: Gamma-glutamyl phosphate reductase 2 (423 aa).

The protein belongs to the gamma-glutamyl phosphate reductase family.

It is found in the cytoplasm. It catalyses the reaction L-glutamate 5-semialdehyde + phosphate + NADP(+) = L-glutamyl 5-phosphate + NADPH + H(+). Its pathway is amino-acid biosynthesis; L-proline biosynthesis; L-glutamate 5-semialdehyde from L-glutamate: step 2/2. Functionally, catalyzes the NADPH-dependent reduction of L-glutamate 5-phosphate into L-glutamate 5-semialdehyde and phosphate. The product spontaneously undergoes cyclization to form 1-pyrroline-5-carboxylate. The polypeptide is Gamma-glutamyl phosphate reductase 2 (Bacillus licheniformis (strain ATCC 14580 / DSM 13 / JCM 2505 / CCUG 7422 / NBRC 12200 / NCIMB 9375 / NCTC 10341 / NRRL NRS-1264 / Gibson 46)).